A 138-amino-acid polypeptide reads, in one-letter code: Mu-like prophage FluMu G protein 2 (138 aa).

To phage Mu protein G.

The polypeptide is Mu-like prophage FluMu G protein 2 (Haemophilus influenzae (strain ATCC 51907 / DSM 11121 / KW20 / Rd)).